Reading from the N-terminus, the 135-residue chain is Hydroxylaminobenzene mutase HabA (135 aa).

Helical transmembrane passes span 5 to 25, 33 to 55, 67 to 87, and 113 to 133; these read LFAS…LVPV, VAGH…LWPY, FWLL…AALW, and FLLF…LIGI.

The protein resides in the cell membrane. It carries out the reaction N-phenylhydroxylamine = 2-aminophenol. In terms of biological role, catalyzes the rearrangement of hydroxylaminobenzene to 2-aminophenol. Involved in the degradation of nitrobenzene. The sequence is that of Hydroxylaminobenzene mutase HabA (habA) from Ectopseudomonas oleovorans (Pseudomonas oleovorans).